The sequence spans 180 residues: MSRIGKSPIVIPAGVTVEVKDGIITVKGKKGQLVQEFSDVNVTVEGDQVLVERSSDHKDHRAKHGLFRSLISNMVVGVSEGFTKELELVGVGYRASNQGQKLDLALGYSHNIVLEIAPEVSLETISEKGKNPIVKLTSFDKQLLGQVAAKIRGFRKPEPYKGKGVKFVGEVLRRKAGKSA.

The protein belongs to the universal ribosomal protein uL6 family. As to quaternary structure, part of the 50S ribosomal subunit.

Its function is as follows. This protein binds to the 23S rRNA, and is important in its secondary structure. It is located near the subunit interface in the base of the L7/L12 stalk, and near the tRNA binding site of the peptidyltransferase center. This chain is Large ribosomal subunit protein uL6, found in Flavobacterium johnsoniae (strain ATCC 17061 / DSM 2064 / JCM 8514 / BCRC 14874 / CCUG 350202 / NBRC 14942 / NCIMB 11054 / UW101) (Cytophaga johnsonae).